A 126-amino-acid chain; its full sequence is uncharacterized protein (126 aa).

This is an uncharacterized protein from Xylella fastidiosa (strain 9a5c).